The sequence spans 303 residues: Digeranylgeranylglyceryl phosphate synthase (303 aa).

7 helical membrane passes run 23–43 (VLGV…AAIA), 88–108 (LALA…PLTG), 130–150 (LPGN…GSLA), 164–184 (TIPI…VKGV), 206–228 (FALR…AAPL), 232–254 (GYAF…AACL), and 272–292 (VAMF…PVFY).

It belongs to the UbiA prenyltransferase family. DGGGP synthase subfamily. Mg(2+) serves as cofactor.

It is found in the cell membrane. It carries out the reaction sn-3-O-(geranylgeranyl)glycerol 1-phosphate + (2E,6E,10E)-geranylgeranyl diphosphate = 2,3-bis-O-(geranylgeranyl)-sn-glycerol 1-phosphate + diphosphate. It participates in membrane lipid metabolism; glycerophospholipid metabolism. Prenyltransferase that catalyzes the transfer of the geranylgeranyl moiety of geranylgeranyl diphosphate (GGPP) to the C2 hydroxyl of (S)-3-O-geranylgeranylglyceryl phosphate (GGGP). This reaction is the second ether-bond-formation step in the biosynthesis of archaeal membrane lipids. This Ignicoccus hospitalis (strain KIN4/I / DSM 18386 / JCM 14125) protein is Digeranylgeranylglyceryl phosphate synthase.